A 131-amino-acid chain; its full sequence is Agouti-signaling protein (131 aa).

Residues 1-22 form the signal peptide; that stretch reads MDVTRLLLATLVGFLCFFTVHS. N-linked (GlcNAc...) asparagine glycosylation occurs at Asn-39. The segment at 58–100 is disordered; that stretch reads KSKKISRKEAEKRKRSSKKKASMKKVARPPPPSPCVATRDSCK. Positions 70–84 are enriched in basic residues; that stretch reads RKRSSKKKASMKKVA. 5 disulfide bridges follow: Cys-92-Cys-107, Cys-99-Cys-113, Cys-106-Cys-124, Cys-110-Cys-131, and Cys-115-Cys-122. The Agouti domain occupies 92 to 131; that stretch reads CVATRDSCKPPAPACCDPCASCQCRFFGSACTCRVLNPNC.

As to expression, epithelial cells of the hair follicles and the epidermis.

The protein resides in the secreted. Involved in the regulation of melanogenesis. The binding of ASP to MC1R precludes alpha-MSH initiated signaling and thus blocks production of cAMP, leading to a down-regulation of eumelanogenesis (brown/black pigment) and thus increasing synthesis of pheomelanin (yellow/red pigment). Causes hair follicle melanocytes to synthesize phaeomelanin instead of black or brown pigment eumelanin and produces hairs with a subapical yellow band on an otherwise black or brown background when expressed during the mid-portion of hair growth. This Mus musculus (Mouse) protein is Agouti-signaling protein (Asip).